A 475-amino-acid chain; its full sequence is Ribulose bisphosphate carboxylase large chain (475 aa).

The propeptide occupies 1–2 (MS). Pro-3 bears the N-acetylproline mark. An N6,N6,N6-trimethyllysine modification is found at Lys-14. 2 residues coordinate substrate: Asn-123 and Thr-173. Residue Lys-175 is the Proton acceptor of the active site. Position 177 (Lys-177) interacts with substrate. Mg(2+)-binding residues include Lys-201, Asp-203, and Glu-204. Lys-201 is modified (N6-carboxylysine). The active-site Proton acceptor is His-294. Substrate contacts are provided by Arg-295, His-327, and Ser-379.

This sequence belongs to the RuBisCO large chain family. Type I subfamily. In terms of assembly, heterohexadecamer of 8 large chains and 8 small chains; disulfide-linked. The disulfide link is formed within the large subunit homodimers. It depends on Mg(2+) as a cofactor. The disulfide bond which can form in the large chain dimeric partners within the hexadecamer appears to be associated with oxidative stress and protein turnover.

It localises to the plastid. The protein resides in the chloroplast. The enzyme catalyses 2 (2R)-3-phosphoglycerate + 2 H(+) = D-ribulose 1,5-bisphosphate + CO2 + H2O. The catalysed reaction is D-ribulose 1,5-bisphosphate + O2 = 2-phosphoglycolate + (2R)-3-phosphoglycerate + 2 H(+). RuBisCO catalyzes two reactions: the carboxylation of D-ribulose 1,5-bisphosphate, the primary event in carbon dioxide fixation, as well as the oxidative fragmentation of the pentose substrate in the photorespiration process. Both reactions occur simultaneously and in competition at the same active site. The sequence is that of Ribulose bisphosphate carboxylase large chain (rbcL) from Marchantia polymorpha (Common liverwort).